A 250-amino-acid chain; its full sequence is MTRYKAIISYDGSQFQGFQRQSHARSVQEEIEKTLTKLTNGKEIKVHGAGRTDSGVHAYGQVLHFDLDQDRDLEKLRFALDTQSPEDIDFISVEKVSDDFHSRYTKHLKTYEFIVDIGRPKNPMMRHYATHFPYPLDLDNIQLAIKDLIGTHDFTGFTASGATIENKVRTIIDASVRYEEDKNFLIFTFTGNGFLYKQVRNMVGTLLKIGNNRMPVDQIKTILEKKDRQLAGPTPAGNGLYLKEIIYEDK.

Asp-53 (nucleophile) is an active-site residue. Substrate is bound at residue Tyr-111.

Belongs to the tRNA pseudouridine synthase TruA family. In terms of assembly, homodimer.

The catalysed reaction is uridine(38/39/40) in tRNA = pseudouridine(38/39/40) in tRNA. Formation of pseudouridine at positions 38, 39 and 40 in the anticodon stem and loop of transfer RNAs. This is tRNA pseudouridine synthase A from Streptococcus uberis (strain ATCC BAA-854 / 0140J).